Here is a 174-residue protein sequence, read N- to C-terminus: RNA pyrophosphohydrolase (174 aa).

The 144-residue stretch at 6–149 (GFRANVGIII…KRDVYRKVMK (144 aa)) folds into the Nudix hydrolase domain. The Nudix box motif lies at 38–59 (GGVDDGESAEEAMYRELYEEVG).

This sequence belongs to the Nudix hydrolase family. RppH subfamily. Requires a divalent metal cation as cofactor.

In terms of biological role, accelerates the degradation of transcripts by removing pyrophosphate from the 5'-end of triphosphorylated RNA, leading to a more labile monophosphorylated state that can stimulate subsequent ribonuclease cleavage. This is RNA pyrophosphohydrolase from Shewanella oneidensis (strain ATCC 700550 / JCM 31522 / CIP 106686 / LMG 19005 / NCIMB 14063 / MR-1).